The following is a 124-amino-acid chain: Small ribosomal subunit protein uS12 (124 aa).

Asp89 carries the post-translational modification 3-methylthioaspartic acid.

Belongs to the universal ribosomal protein uS12 family. In terms of assembly, part of the 30S ribosomal subunit. Contacts proteins S8 and S17. May interact with IF1 in the 30S initiation complex.

With S4 and S5 plays an important role in translational accuracy. Functionally, interacts with and stabilizes bases of the 16S rRNA that are involved in tRNA selection in the A site and with the mRNA backbone. Located at the interface of the 30S and 50S subunits, it traverses the body of the 30S subunit contacting proteins on the other side and probably holding the rRNA structure together. The combined cluster of proteins S8, S12 and S17 appears to hold together the shoulder and platform of the 30S subunit. The protein is Small ribosomal subunit protein uS12 of Glaesserella parasuis serovar 5 (strain SH0165) (Haemophilus parasuis).